The sequence spans 500 residues: L-aspartate semialdehyde sulfurtransferase (500 aa).

C131 acts as the Cysteine persulfide intermediate in catalysis. CBS domains follow at residues 384–441 (MADF…IFDS) and 446–500 (MTKK…ARRY).

It belongs to the L-aspartate semialdehyde sulfurtransferase family. In terms of assembly, forms homodimers. May form a complex with MA_1822.

The catalysed reaction is L-aspartate 4-semialdehyde + reduced 2[4Fe-4S]-[ferredoxin] + hydrogen sulfide + 3 H(+) = oxidized 2[4Fe-4S]-[ferredoxin] + L-homocysteine + H2O. Its pathway is amino-acid biosynthesis. Its function is as follows. Required for O-acetylhomoserine sulfhydrylase (OAHS)-independent homocysteine (Hcy) biosynthesis. Together with MA_1822, catalyzes the condensation of sulfide with aspartate semialdehyde to generate homocysteine. Likely functions through persulfide intermediate. In Methanosarcina acetivorans (strain ATCC 35395 / DSM 2834 / JCM 12185 / C2A), this protein is L-aspartate semialdehyde sulfurtransferase.